Here is a 409-residue protein sequence, read N- to C-terminus: N-carbamoyl-L-amino acid amidohydrolase (409 aa).

A divalent metal cation contacts are provided by H79, D90, E125, and H189. Q192, H225, N273, R286, and A355 together coordinate an N-carbamoyl-L-alpha-amino acid. The interval 208–325 is involved in dimerization; sequence GIAGLIWVKF…TTERLQEMAP (118 aa). Residue H380 coordinates a divalent metal cation.

Belongs to the peptidase M20 family. In terms of assembly, homodimer. Mn(2+) is required as a cofactor. Ni(2+) serves as cofactor. It depends on Co(2+) as a cofactor. Requires Fe(2+) as cofactor.

It carries out the reaction an N-carbamoyl-L-alpha-amino acid + H2O + 2 H(+) = an L-alpha-amino acid + NH4(+) + CO2. It catalyses the reaction N-carbamoyl-L-methionine + H2O + 2 H(+) = L-methionine + NH4(+) + CO2. The enzyme catalyses N-acetyl-L-methionine + H2O = L-methionine + acetate. The catalysed reaction is N-carbamoyl-L-alanine + H2O + 2 H(+) = L-alanine + NH4(+) + CO2. It carries out the reaction N-carbamoyl-L-glutamate + H2O + 2 H(+) = L-glutamate + NH4(+) + CO2. It catalyses the reaction N-carbamoylglycine + H2O + 2 H(+) = glycine + NH4(+) + CO2. The enzyme catalyses N-carbamoyl-L-leucine + H2O + 2 H(+) = L-leucine + NH4(+) + CO2. Functionally, catalyzes the hydrolysis of aliphatic N-carbamoyl-L-alpha-amino acids to free L-alpha-amino acids. Is strictly L-specific since it is inactive toward N-carbamoyl-D-alpha-amino acids. Is not able to use aromatic N-carbamoyl-L-alpha-amino acids like N-carbamoyl-L-tryptophan and N-carbamoyl-L-phenylalanine as substrates, but is also able to hydrolyze N-acetyl-L-methionine. This chain is N-carbamoyl-L-amino acid amidohydrolase, found in Geobacillus stearothermophilus (Bacillus stearothermophilus).